A 393-amino-acid polypeptide reads, in one-letter code: NAD(P)H-quinone oxidoreductase subunit H, chloroplastic (393 aa).

It belongs to the complex I 49 kDa subunit family. NDH is composed of at least 16 different subunits, 5 of which are encoded in the nucleus.

The protein localises to the plastid. The protein resides in the chloroplast thylakoid membrane. It carries out the reaction a plastoquinone + NADH + (n+1) H(+)(in) = a plastoquinol + NAD(+) + n H(+)(out). The catalysed reaction is a plastoquinone + NADPH + (n+1) H(+)(in) = a plastoquinol + NADP(+) + n H(+)(out). Functionally, NDH shuttles electrons from NAD(P)H:plastoquinone, via FMN and iron-sulfur (Fe-S) centers, to quinones in the photosynthetic chain and possibly in a chloroplast respiratory chain. The immediate electron acceptor for the enzyme in this species is believed to be plastoquinone. Couples the redox reaction to proton translocation, and thus conserves the redox energy in a proton gradient. In Anthoceros angustus (Hornwort), this protein is NAD(P)H-quinone oxidoreductase subunit H, chloroplastic.